The chain runs to 305 residues: Maximins-S type B/C (305 aa).

Positions 1–18 are cleaved as a signal peptide; that stretch reads MNFNYFILVLFFITSGHA. Propeptides lie at residues 19 to 35 and 52 to 65; these read KSET…HIKR and SAEE…LVTR. Asparagine amide is present on asparagine 83. The propeptide occupies 87–100; sequence SAEEQDLAEHLVTR. Asparagine amide is present on asparagine 118. Positions 122–135 are excised as a propeptide; it reads SAEEQDLAEDLVTR. Residue lysine 153 is modified to Lysine amide. Residues 157 to 170 constitute a propeptide that is removed on maturation; it reads SAEDQDLAEDLVTR. Residue asparagine 188 is modified to Asparagine amide. Residues 192–205 constitute a propeptide that is removed on maturation; that stretch reads SAEEQDLAEHLVTR. The residue at position 223 (asparagine 223) is an Asparagine amide. The propeptide occupies 227-240; that stretch reads SAEEQDLSEDLVTR. Position 258 is an asparagine amide (asparagine 258). The propeptide occupies 262-275; sequence SAEEQDLVEDLVTR. Lysine 293 carries the post-translational modification Lysine amide. Residues 297-305 constitute a propeptide that is removed on maturation; that stretch reads SAEQEKDMK.

It belongs to the maximin-S family. Expressed by the skin dorsal glands.

The protein localises to the secreted. Functionally, maximin-S1 has no antimicrobial activity. Has no hemolytic activity. Its function is as follows. Maximin-S2 has an activity against mycoplasma but has no activity against common Gram-positive and Gram-negative bacteria nor fungi. Has no hemolytic activity. Maximin-S3 has an activity against mycoplasma but has no activity against common Gram-positive and Gram-negative bacteria nor fungi. Has no hemolytic activity. In terms of biological role, maximin-S4 has an activity against mycoplasma but has no activity against common Gram-positive and Gram-negative bacteria nor fungi. Has no hemolytic activity. Functionally, maximin-S5 has an activity against mycoplasma but has no activity against common Gram-positive and Gram-negative bacteria nor fungi. Has no hemolytic activity. The protein is Maximins-S type B/C of Bombina maxima (Giant fire-bellied toad).